Reading from the N-terminus, the 471-residue chain is Glutamate--tRNA ligase 1 (471 aa).

Residues 10–20 (PSPTGYLHIGG) carry the 'HIGH' region motif. Residues Cys-99, Cys-101, Cys-126, and Asp-128 each coordinate Zn(2+). The 'KMSKS' region motif lies at 238–242 (RLSKR). Lys-241 provides a ligand contact to ATP.

The protein belongs to the class-I aminoacyl-tRNA synthetase family. Glutamate--tRNA ligase type 1 subfamily. As to quaternary structure, monomer. It depends on Zn(2+) as a cofactor.

Its subcellular location is the cytoplasm. The enzyme catalyses tRNA(Glu) + L-glutamate + ATP = L-glutamyl-tRNA(Glu) + AMP + diphosphate. In terms of biological role, catalyzes the attachment of glutamate to tRNA(Glu) in a two-step reaction: glutamate is first activated by ATP to form Glu-AMP and then transferred to the acceptor end of tRNA(Glu). The sequence is that of Glutamate--tRNA ligase 1 from Alkalilimnicola ehrlichii (strain ATCC BAA-1101 / DSM 17681 / MLHE-1).